Reading from the N-terminus, the 547-residue chain is MLPSFTRKPADHPIGYLVALSGLLMQLMSYGIDNSYSIFSEDMHNDPSLGFPSITAISLGNSVSLGLSPAFGVLAGFCVDRLPPRFMMALSTILLFTGLWISSTLAANIYVVTFTYCLFASIGTACMLSPGAAATSSWFNRYQGLAMGINFAGGGIGSAIIPPLAGKWVVAYGWRKAFQLMSIFCAIGVLATALSARRREPKRDDSSADDETREGNKSGNGSLVRRSNEPATVGGEGAANNGHNEGKEDVREMGRKNGSHTNTSKVPPNGRGVGTNQQNGNDGEGLDVTEQSQRNNTFASAIDVDMDTSMDADEPQVIRSLHTHKLTPWELFLSMFTLPFMGNFLCWFIYSWAFYSLIYAAVPYISSMGKPGTVYAGVPPIPTDVAATLFTFYGVFQVVGSVLVGWLASLVTAEFAYVFCATVGGIGCGLLALGRSYVAFALLLCIIGFCMAGMFAVMPTLIATHLYGPNLGFYFGAVFLAGVVGGFVAPPMQATIQLRNNGSYAFVCVVMSVSMTLSALVCYATLWRSKRSGIVLAARKTKLVEIM.

Topologically, residues 1 to 11 (MLPSFTRKPAD) are cytoplasmic. Residues 12–32 (HPIGYLVALSGLLMQLMSYGI) form a helical membrane-spanning segment. The Extracellular segment spans residues 33–58 (DNSYSIFSEDMHNDPSLGFPSITAIS). Residues 59 to 79 (LGNSVSLGLSPAFGVLAGFCV) traverse the membrane as a helical segment. Over 80-85 (DRLPPR) the chain is Cytoplasmic. A helical membrane pass occupies residues 86-106 (FMMALSTILLFTGLWISSTLA). Residues 107-108 (AN) are Extracellular-facing. The chain crosses the membrane as a helical span at residues 109–129 (IYVVTFTYCLFASIGTACMLS). Residues 130–144 (PGAAATSSWFNRYQG) are Cytoplasmic-facing. The chain crosses the membrane as a helical span at residues 145–165 (LAMGINFAGGGIGSAIIPPLA). Residues 166–175 (GKWVVAYGWR) lie on the Extracellular side of the membrane. A helical transmembrane segment spans residues 176–196 (KAFQLMSIFCAIGVLATALSA). Over 197 to 344 (RRREPKRDDS…MFTLPFMGNF (148 aa)) the chain is Cytoplasmic. Residues 198 to 293 (RREPKRDDSS…EGLDVTEQSQ (96 aa)) form a disordered region. The segment covering 244–255 (NEGKEDVREMGR) has biased composition (basic and acidic residues). A helical transmembrane segment spans residues 345–365 (LCWFIYSWAFYSLIYAAVPYI). The Extracellular segment spans residues 366–386 (SSMGKPGTVYAGVPPIPTDVA). A helical transmembrane segment spans residues 387-407 (ATLFTFYGVFQVVGSVLVGWL). Topologically, residues 408 to 412 (ASLVT) are cytoplasmic. The chain crosses the membrane as a helical span at residues 413 to 433 (AEFAYVFCATVGGIGCGLLAL). The Extracellular segment spans residues 434–437 (GRSY). A helical transmembrane segment spans residues 438–458 (VAFALLLCIIGFCMAGMFAVM). The Cytoplasmic segment spans residues 459 to 470 (PTLIATHLYGPN). A helical membrane pass occupies residues 471-491 (LGFYFGAVFLAGVVGGFVAPP). Residues 492-505 (MQATIQLRNNGSYA) are Extracellular-facing. Residue asparagine 501 is glycosylated (N-linked (GlcNAc...) asparagine). A helical transmembrane segment spans residues 506–526 (FVCVVMSVSMTLSALVCYATL). The Cytoplasmic portion of the chain corresponds to 527 to 547 (WRSKRSGIVLAARKTKLVEIM).

The protein belongs to the major facilitator superfamily. RibJ family.

It is found in the cell membrane. Functionally, transporter involved in riboflavin (vitamin B2) uptake. Also transports FMN and FAD. The protein is Riboflavin transporter RibJ of Trypanosoma brucei brucei (strain 927/4 GUTat10.1).